A 348-amino-acid chain; its full sequence is Ferrochelatase (348 aa).

Positions 218 and 299 each coordinate Fe cation.

It belongs to the ferrochelatase family.

It localises to the cytoplasm. It catalyses the reaction heme b + 2 H(+) = protoporphyrin IX + Fe(2+). It participates in porphyrin-containing compound metabolism; protoheme biosynthesis; protoheme from protoporphyrin-IX: step 1/1. Catalyzes the ferrous insertion into protoporphyrin IX. This Methylocella silvestris (strain DSM 15510 / CIP 108128 / LMG 27833 / NCIMB 13906 / BL2) protein is Ferrochelatase.